Reading from the N-terminus, the 110-residue chain is uncharacterized protein (110 aa).

The chain crosses the membrane as a helical span at residues 18–34 (MFPLISTFTSIGLGVLM).

It localises to the membrane. This is an uncharacterized protein from Saccharomyces cerevisiae (strain ATCC 204508 / S288c) (Baker's yeast).